The sequence spans 230 residues: Cytochrome c oxidase subunit 2 (230 aa).

Residues M1 to S14 are Mitochondrial intermembrane-facing. A helical transmembrane segment spans residues P15–M45. Over V46–Q59 the chain is Mitochondrial matrix. Residues E60–M87 form a helical membrane-spanning segment. The Mitochondrial intermembrane segment spans residues D88–A230. Positions 161, 196, 198, 200, 204, and 207 each coordinate Cu cation. Residue E198 coordinates Mg(2+).

The protein belongs to the cytochrome c oxidase subunit 2 family. As to quaternary structure, component of the cytochrome c oxidase (complex IV, CIV), a multisubunit enzyme composed of 14 subunits. The complex is composed of a catalytic core of 3 subunits MT-CO1, MT-CO2 and MT-CO3, encoded in the mitochondrial DNA, and 11 supernumerary subunits COX4I, COX5A, COX5B, COX6A, COX6B, COX6C, COX7A, COX7B, COX7C, COX8 and NDUFA4, which are encoded in the nuclear genome. The complex exists as a monomer or a dimer and forms supercomplexes (SCs) in the inner mitochondrial membrane with NADH-ubiquinone oxidoreductase (complex I, CI) and ubiquinol-cytochrome c oxidoreductase (cytochrome b-c1 complex, complex III, CIII), resulting in different assemblies (supercomplex SCI(1)III(2)IV(1) and megacomplex MCI(2)III(2)IV(2)). Found in a complex with TMEM177, COA6, COX18, COX20, SCO1 and SCO2. Interacts with TMEM177 in a COX20-dependent manner. Interacts with COX20. Interacts with COX16. Cu cation serves as cofactor.

The protein localises to the mitochondrion inner membrane. The enzyme catalyses 4 Fe(II)-[cytochrome c] + O2 + 8 H(+)(in) = 4 Fe(III)-[cytochrome c] + 2 H2O + 4 H(+)(out). Functionally, component of the cytochrome c oxidase, the last enzyme in the mitochondrial electron transport chain which drives oxidative phosphorylation. The respiratory chain contains 3 multisubunit complexes succinate dehydrogenase (complex II, CII), ubiquinol-cytochrome c oxidoreductase (cytochrome b-c1 complex, complex III, CIII) and cytochrome c oxidase (complex IV, CIV), that cooperate to transfer electrons derived from NADH and succinate to molecular oxygen, creating an electrochemical gradient over the inner membrane that drives transmembrane transport and the ATP synthase. Cytochrome c oxidase is the component of the respiratory chain that catalyzes the reduction of oxygen to water. Electrons originating from reduced cytochrome c in the intermembrane space (IMS) are transferred via the dinuclear copper A center (CU(A)) of subunit 2 and heme A of subunit 1 to the active site in subunit 1, a binuclear center (BNC) formed by heme A3 and copper B (CU(B)). The BNC reduces molecular oxygen to 2 water molecules using 4 electrons from cytochrome c in the IMS and 4 protons from the mitochondrial matrix. The protein is Cytochrome c oxidase subunit 2 (mt-co2) of Gadus morhua (Atlantic cod).